The chain runs to 70 residues: Waprin-Thr1 (70 aa).

Positions 1-19 (MKARLLLLSVVILVGMVSA) are cleaved as a signal peptide. The region spanning 20–70 (ENEKAGSCPDVNQPIPPLGLCRNMCESDSGCPNNEKCCKNGCGFMTCSRPR) is the WAP domain. 4 disulfides stabilise this stretch: cysteine 27–cysteine 57, cysteine 40–cysteine 61, cysteine 44–cysteine 56, and cysteine 50–cysteine 66.

The protein belongs to the venom waprin family. As to expression, expressed by the venom gland.

Its subcellular location is the secreted. Functionally, damages membranes of susceptible bacteria. Has no hemolytic activity. Not toxic to mice. Does not inhibit the proteinases elastase and cathepsin G. This is Waprin-Thr1 from Thrasops jacksonii (Jackson's black tree snake).